The chain runs to 292 residues: 33 kDa chaperonin (292 aa).

2 disulfide bridges follow: cysteine 238–cysteine 240 and cysteine 271–cysteine 274.

This sequence belongs to the HSP33 family. Post-translationally, under oxidizing conditions two disulfide bonds are formed involving the reactive cysteines. Under reducing conditions zinc is bound to the reactive cysteines and the protein is inactive.

Its subcellular location is the cytoplasm. Functionally, redox regulated molecular chaperone. Protects both thermally unfolding and oxidatively damaged proteins from irreversible aggregation. Plays an important role in the bacterial defense system toward oxidative stress. In Alkaliphilus metalliredigens (strain QYMF), this protein is 33 kDa chaperonin.